We begin with the raw amino-acid sequence, 316 residues long: MSQPNQIHNALYLAFQRLQWSGLRESVPLTLSENDLADLRGINEKISLSEVTDIYLPLSRLLNLNVGAKQQRGLALNEFLGHVPPKRPYIISIAGSVAVGKSTTARILQALLSHWPEHPKVDLITTDGFLYPLSELKRRGLLQRKGFPESYDMKALVEFISAIKAGEPNVSAPIYSHITYDRIQDEQQWIRQPDILIIEGLNVLQTGQDSPVDTQRPFVSDFVDFSIYVDANESLLKKWYIDRFLQFRTGAFSSENSYFHHYSKLGDEEATATASNIWDTINGPNLTLNILPTRERAHLILQKGPDHMMDQVLLRK.

95–102 (GSVAVGKS) contributes to the ATP binding site.

It belongs to the prokaryotic pantothenate kinase family.

It localises to the cytoplasm. The enzyme catalyses (R)-pantothenate + ATP = (R)-4'-phosphopantothenate + ADP + H(+). It functions in the pathway cofactor biosynthesis; coenzyme A biosynthesis; CoA from (R)-pantothenate: step 1/5. In Shewanella pealeana (strain ATCC 700345 / ANG-SQ1), this protein is Pantothenate kinase.